Here is a 532-residue protein sequence, read N- to C-terminus: Cytochrome c oxidase subunit 1 (532 aa).

The next 3 helical transmembrane spans lie at 1 to 21 (MWDY…AYAA), 27 to 47 (LPYM…LIWV), and 69 to 89 (GVIA…VIAF). H114 lines the heme b pocket. The next 8 membrane-spanning stretches (helical) occupy residues 115–135 (TSAV…FYVV), 143–163 (LFGG…IIVT), 185–205 (LDIL…GTIF), 212–232 (IYVA…LHIV), 263–283 (GHNA…YYFV), 296–316 (LSIV…PHHL), 328–348 (LGMV…INGL), and 366–386 (MMVV…MMSI). Cu cation is bound by residues H264, H314, and H315. H402 and H404 together coordinate heme b. The next 3 helical transmembrane spans lie at 403-423 (VHSG…YFLT), 442-462 (FWLA…TGIM), and 496-516 (VGGV…WATV).

The protein belongs to the heme-copper respiratory oxidase family. It depends on Cu(2+) as a cofactor. The cofactor is heme b.

Its subcellular location is the cell membrane. The enzyme catalyses 4 Fe(II)-[cytochrome c] + O2 + 8 H(+)(in) = 4 Fe(III)-[cytochrome c] + 2 H2O + 4 H(+)(out). It functions in the pathway energy metabolism; oxidative phosphorylation. Functionally, cytochrome c oxidase is the component of the respiratory chain that catalyzes the reduction of oxygen to water. Subunits 1-3 form the functional core of the enzyme complex. Co I is the catalytic subunit of the enzyme. Electrons originating in cytochrome c are transferred via the copper A center of subunit 2 and heme a of subunit 1 to the bimetallic center formed by heme a3 and copper B. This cytochrome c oxidase shows proton pump activity across the membrane in addition to the electron transfer. This Rhodobacter capsulatus (Rhodopseudomonas capsulata) protein is Cytochrome c oxidase subunit 1 (ctaD).